Here is a 252-residue protein sequence, read N- to C-terminus: Aspartate/glutamate leucyltransferase (252 aa).

This sequence belongs to the R-transferase family. Bpt subfamily.

Its subcellular location is the cytoplasm. It carries out the reaction N-terminal L-glutamyl-[protein] + L-leucyl-tRNA(Leu) = N-terminal L-leucyl-L-glutamyl-[protein] + tRNA(Leu) + H(+). The enzyme catalyses N-terminal L-aspartyl-[protein] + L-leucyl-tRNA(Leu) = N-terminal L-leucyl-L-aspartyl-[protein] + tRNA(Leu) + H(+). Functionally, functions in the N-end rule pathway of protein degradation where it conjugates Leu from its aminoacyl-tRNA to the N-termini of proteins containing an N-terminal aspartate or glutamate. The polypeptide is Aspartate/glutamate leucyltransferase (Afipia carboxidovorans (strain ATCC 49405 / DSM 1227 / KCTC 32145 / OM5) (Oligotropha carboxidovorans)).